We begin with the raw amino-acid sequence, 281 residues long: N-acetyltransferase ECO1 (281 aa).

A CCHH-type zinc finger spans residues V33–H57. The segment at L86 to S105 is disordered. The segment covering P95–S105 has biased composition (low complexity). At K223 the chain carries N6-acetyllysine; by autocatalysis.

Belongs to the acetyltransferase family. ECO subfamily. In terms of assembly, binds specifically to CHL12, RFC1, RFC2, RFC3, RFC4, RFC5 and RAD24 when members of an RFC complex. Interacts with CHL1 and MPS3. Post-translationally, autoacetylates in vitro.

The protein resides in the nucleus. In terms of biological role, required for establishment of sister chromatid cohesion during S phase but not for its further maintenance during G2 or M phases or for loading the cohesin complex onto DNA. Interacts with the three known alternate replication factor C (RFC) complexes, suggesting that these complexes have essential but redundant activity in cohesion establishment. Acts by acetylating the cohesin complex component SMC3. In vitro, possesses acetyltransferase activity where it can acetylate itself and components of the cohesin complex (MCD1, IRR1 and PDS5), but is unable to acetylate histones. In Saccharomyces cerevisiae (strain ATCC 204508 / S288c) (Baker's yeast), this protein is N-acetyltransferase ECO1 (ECO1).